The primary structure comprises 325 residues: Tetraacyldisaccharide 4'-kinase (325 aa).

58–65 (TVGGSGKT) lines the ATP pocket.

This sequence belongs to the LpxK family.

It carries out the reaction a lipid A disaccharide + ATP = a lipid IVA + ADP + H(+). The protein operates within glycolipid biosynthesis; lipid IV(A) biosynthesis; lipid IV(A) from (3R)-3-hydroxytetradecanoyl-[acyl-carrier-protein] and UDP-N-acetyl-alpha-D-glucosamine: step 6/6. Its function is as follows. Transfers the gamma-phosphate of ATP to the 4'-position of a tetraacyldisaccharide 1-phosphate intermediate (termed DS-1-P) to form tetraacyldisaccharide 1,4'-bis-phosphate (lipid IVA). This is Tetraacyldisaccharide 4'-kinase from Coxiella burnetii (strain RSA 331 / Henzerling II).